A 351-amino-acid chain; its full sequence is Peptide chain release factor 1 (351 aa).

Gln229 carries the N5-methylglutamine modification.

This sequence belongs to the prokaryotic/mitochondrial release factor family. In terms of processing, methylated by PrmC. Methylation increases the termination efficiency of RF1.

The protein resides in the cytoplasm. Peptide chain release factor 1 directs the termination of translation in response to the peptide chain termination codons UAG and UAA. The protein is Peptide chain release factor 1 of Cereibacter sphaeroides (strain ATCC 17029 / ATH 2.4.9) (Rhodobacter sphaeroides).